The following is a 395-amino-acid chain: 1-deoxy-D-xylulose 5-phosphate reductoisomerase (395 aa).

Residues Thr15, Gly16, Ser17, Ile18, Gly41, Asn43, and Asn126 each coordinate NADPH. Lys127 provides a ligand contact to 1-deoxy-D-xylulose 5-phosphate. Glu128 is an NADPH binding site. Mn(2+) is bound at residue Asp152. 1-deoxy-D-xylulose 5-phosphate-binding residues include Ser153, Glu154, Ser178, and His201. Residue Glu154 coordinates Mn(2+). Gly207 contributes to the NADPH binding site. Residues Ser214, Asn219, Lys220, and Glu223 each coordinate 1-deoxy-D-xylulose 5-phosphate. Residue Glu223 coordinates Mn(2+).

The protein belongs to the DXR family. Mg(2+) is required as a cofactor. Mn(2+) serves as cofactor.

It carries out the reaction 2-C-methyl-D-erythritol 4-phosphate + NADP(+) = 1-deoxy-D-xylulose 5-phosphate + NADPH + H(+). The protein operates within isoprenoid biosynthesis; isopentenyl diphosphate biosynthesis via DXP pathway; isopentenyl diphosphate from 1-deoxy-D-xylulose 5-phosphate: step 1/6. Functionally, catalyzes the NADPH-dependent rearrangement and reduction of 1-deoxy-D-xylulose-5-phosphate (DXP) to 2-C-methyl-D-erythritol 4-phosphate (MEP). In Ruegeria sp. (strain TM1040) (Silicibacter sp.), this protein is 1-deoxy-D-xylulose 5-phosphate reductoisomerase.